A 181-amino-acid chain; its full sequence is Large ribosomal subunit protein uL5 (181 aa).

It belongs to the universal ribosomal protein uL5 family. As to quaternary structure, part of the 50S ribosomal subunit; contacts the 5S rRNA and probably tRNA. Forms a bridge to the 30S subunit in the 70S ribosome.

Functionally, this is one of the proteins that bind and probably mediate the attachment of the 5S RNA into the large ribosomal subunit, where it forms part of the central protuberance. In the 70S ribosome it contacts protein S13 of the 30S subunit (bridge B1b), connecting the 2 subunits; this bridge is implicated in subunit movement. May contact the P site tRNA; the 5S rRNA and some of its associated proteins might help stabilize positioning of ribosome-bound tRNAs. In Methanococcus maripaludis (strain C7 / ATCC BAA-1331), this protein is Large ribosomal subunit protein uL5.